We begin with the raw amino-acid sequence, 68 residues long: Amphipathic peptide OcyC1 (68 aa).

The signal sequence occupies residues 1 to 23 (MKAQLCILLIALVLFQTFSQSDA). Position 36 is a phenylalanine amide (Phe36). The propeptide occupies 38-68 (RRGLNDLDDLDELFDGEISQADVDFLNELMR).

The protein belongs to the non-disulfide-bridged peptide (NDBP) superfamily. Short antimicrobial peptide (group 4) family. As to expression, expressed by the venom gland.

It localises to the secreted. Its subcellular location is the target cell membrane. Antimicrobial peptide. Inhibits the growth of Gram-positive and Gram-negative bacteria. Shows antifungal activity with MIC values ranging from 12.5 to 25 uM. Also shows an inhibitory activity on C.albicans biofilms at high concentrations. Shows low cytotoxic activity and has weak hemolytic activity. In Opisthacanthus cayaporum (South American scorpion), this protein is Amphipathic peptide OcyC1.